Reading from the N-terminus, the 324-residue chain is Glyoxylate/hydroxypyruvate reductase B (324 aa).

Catalysis depends on residues Arg237 and Glu266. Residue His285 is the Proton donor of the active site.

This sequence belongs to the D-isomer specific 2-hydroxyacid dehydrogenase family. GhrB subfamily. As to quaternary structure, homodimer.

It localises to the cytoplasm. The enzyme catalyses glycolate + NADP(+) = glyoxylate + NADPH + H(+). It carries out the reaction (R)-glycerate + NAD(+) = 3-hydroxypyruvate + NADH + H(+). It catalyses the reaction (R)-glycerate + NADP(+) = 3-hydroxypyruvate + NADPH + H(+). Functionally, catalyzes the NADPH-dependent reduction of glyoxylate and hydroxypyruvate into glycolate and glycerate, respectively. In Salmonella paratyphi A (strain ATCC 9150 / SARB42), this protein is Glyoxylate/hydroxypyruvate reductase B.